A 677-amino-acid polypeptide reads, in one-letter code: High-affinity choline transport protein (677 aa).

The next 12 helical transmembrane spans lie at 15–35 (PVVF…TILF), 54–74 (FGWY…CIAC), 94–114 (LSWA…FFSV), 144–164 (FHYG…LGYF), 196–216 (IAAV…GVVQ), 233–253 (AKAA…TSGV), 265–285 (VALA…SFLL), 319–339 (WTLF…LFLA), 350–370 (FVLG…SVFG), 412–432 (VATI…ALVL), 452–472 (VFWS…NGIS), and 477–497 (TTVI…AGLY).

The protein belongs to the BCCT transporter (TC 2.A.15) family.

It is found in the cell inner membrane. It catalyses the reaction choline(in) + H(+)(in) = choline(out) + H(+)(out). It functions in the pathway amine and polyamine biosynthesis; betaine biosynthesis via choline pathway. High-affinity uptake of choline driven by a proton-motive force. This chain is High-affinity choline transport protein (betT), found in Escherichia coli O157:H7.